A 181-amino-acid chain; its full sequence is Dehydration-responsive element-binding protein 1E (181 aa).

Residues 14–26 (KKRAGRRIFKETR) carry the Nuclear localization signal motif. Residues 29-86 (IYRGVRRRDGDKWVCEVREPIHQRRVWLGTYPTADMAARAHDVAVLALRGRSACLNFS) constitute a DNA-binding region (AP2/ERF).

The protein belongs to the AP2/ERF transcription factor family. ERF subfamily.

Its subcellular location is the nucleus. In terms of biological role, transcriptional activator that binds specifically to the DNA sequence 5'-[AG]CCGAC-3'. Binding to the C-repeat/DRE element mediates cold or dehydration-inducible transcription. CBF/DREB1 factors play a key role in freezing tolerance and cold acclimation. This Arabidopsis thaliana (Mouse-ear cress) protein is Dehydration-responsive element-binding protein 1E (DREB1E).